Here is a 266-residue protein sequence, read N- to C-terminus: Undecaprenyl-diphosphatase (266 aa).

The next 7 helical transmembrane spans lie at 39–59 (PGSS…VWYF), 86–106 (SIFI…LFVP), 112–132 (VLRS…FMYL), 153–173 (LIGF…GITI), 189–209 (FSFL…FIFS), 216–236 (IGFL…LLAI), and 246–266 (NGLK…LLNL).

It belongs to the UppP family.

It localises to the cell inner membrane. The catalysed reaction is di-trans,octa-cis-undecaprenyl diphosphate + H2O = di-trans,octa-cis-undecaprenyl phosphate + phosphate + H(+). In terms of biological role, catalyzes the dephosphorylation of undecaprenyl diphosphate (UPP). Confers resistance to bacitracin. The sequence is that of Undecaprenyl-diphosphatase from Prochlorococcus marinus (strain MIT 9215).